Consider the following 396-residue polypeptide: Tryptophan synthase beta chain (396 aa).

At Lys88 the chain carries N6-(pyridoxal phosphate)lysine.

The protein belongs to the TrpB family. As to quaternary structure, tetramer of two alpha and two beta chains. Pyridoxal 5'-phosphate serves as cofactor.

The catalysed reaction is (1S,2R)-1-C-(indol-3-yl)glycerol 3-phosphate + L-serine = D-glyceraldehyde 3-phosphate + L-tryptophan + H2O. It participates in amino-acid biosynthesis; L-tryptophan biosynthesis; L-tryptophan from chorismate: step 5/5. Functionally, the beta subunit is responsible for the synthesis of L-tryptophan from indole and L-serine. The sequence is that of Tryptophan synthase beta chain from Actinobacillus pleuropneumoniae serotype 7 (strain AP76).